Reading from the N-terminus, the 372-residue chain is NAD(P)H-quinone oxidoreductase subunit 1, chloroplastic (372 aa).

8 helical membrane passes run 28–48 (IWIC…VLVI), 65–85 (PEYA…KLIL), 97–117 (WLFT…YLVV), 128–148 (IGIG…GLLI), 166–186 (AAQA…IILM), 254–274 (FGLF…FVSV), 312–332 (GIIG…LAVL), and 352–372 (FLLP…ITLL).

It belongs to the complex I subunit 1 family. NDH is composed of at least 16 different subunits, 5 of which are encoded in the nucleus.

It is found in the plastid. The protein localises to the chloroplast thylakoid membrane. The catalysed reaction is a plastoquinone + NADH + (n+1) H(+)(in) = a plastoquinol + NAD(+) + n H(+)(out). It carries out the reaction a plastoquinone + NADPH + (n+1) H(+)(in) = a plastoquinol + NADP(+) + n H(+)(out). Its function is as follows. NDH shuttles electrons from NAD(P)H:plastoquinone, via FMN and iron-sulfur (Fe-S) centers, to quinones in the photosynthetic chain and possibly in a chloroplast respiratory chain. The immediate electron acceptor for the enzyme in this species is believed to be plastoquinone. Couples the redox reaction to proton translocation, and thus conserves the redox energy in a proton gradient. The protein is NAD(P)H-quinone oxidoreductase subunit 1, chloroplastic of Staurastrum punctulatum (Green alga).